The sequence spans 341 residues: Putative amino-acid ABC transporter-binding protein YhdW (341 aa).

A signal peptide spans 1–19; that stretch reads MKKMMIATLAAASVLLAVA.

It belongs to the bacterial solute-binding protein 3 family.

Its subcellular location is the periplasm. Probably part of the binding-protein-dependent transport system YdhWXYZ for an amino acid. The protein is Putative amino-acid ABC transporter-binding protein YhdW (yhdW) of Escherichia coli (strain K12).